The following is a 601-amino-acid chain: Alpha-terpineol synthase, chloroplastic (601 aa).

The transit peptide at 1 to 47 directs the protein to the chloroplast; sequence MSTISIHHVGILRNPLHSKSKRASINKPWSLSLPRSSSASRLVEPCR. Positions 357 and 361 each coordinate Mn(2+). The short motif at 357 to 361 is the DDXXD motif element; that stretch reads DDVYD. Homodimerization stretches follow at residues 363–369 and 435–471; these read YGTLDEL and EAEWYKSGYTPSLEEYLTIAKISIASLTILLSVELSL. Mn(2+) is bound by residues Asp-499 and Glu-507.

The protein belongs to the terpene synthase family. In terms of assembly, homodimer. Requires Mn(2+) as cofactor. Mg(2+) is required as a cofactor.

It localises to the plastid. The protein localises to the chloroplast. It carries out the reaction (2E)-geranyl diphosphate + H2O = (S)-alpha-terpineol + diphosphate. The enzyme catalyses (2E)-geranyl diphosphate + H2O = (R)-alpha-terpineol + diphosphate. Its pathway is secondary metabolite biosynthesis; terpenoid biosynthesis. Its function is as follows. Involved in the biosynthesis of phenolic monoterpenes natural products. Monoterpene synthase which catalyzes the conversion of geranyl diphosphate (GPP) to alpha-terpineol (isomer is not determined). This chain is Alpha-terpineol synthase, chloroplastic, found in Thymus caespititius (Cretan thyme).